Reading from the N-terminus, the 228-residue chain is Lipoprotein-releasing system ATP-binding protein LolD (228 aa).

The ABC transporter domain occupies 6-225 (LEAKDVYKHF…ILHMQDGLWV (220 aa)). 42 to 49 (GASGSGKS) is a binding site for ATP.

The protein belongs to the ABC transporter superfamily. Lipoprotein translocase (TC 3.A.1.125) family. The complex is composed of two ATP-binding proteins (LolD) and two transmembrane proteins (LolC and LolE).

It is found in the cell inner membrane. Functionally, part of the ABC transporter complex LolCDE involved in the translocation of mature outer membrane-directed lipoproteins, from the inner membrane to the periplasmic chaperone, LolA. Responsible for the formation of the LolA-lipoprotein complex in an ATP-dependent manner. The chain is Lipoprotein-releasing system ATP-binding protein LolD from Acinetobacter baylyi (strain ATCC 33305 / BD413 / ADP1).